The sequence spans 271 residues: Thermoregulatory protein LcrF (271 aa).

Positions 167–265 (ERLQKFMEEN…GCTPSQARLT (99 aa)) constitute an HTH araC/xylS-type domain. DNA-binding regions (H-T-H motif) lie at residues 184-205 (SKFA…GTVY) and 232-255 (IVDI…RRRF).

In terms of biological role, transcriptional activator of the thermally regulated virulent yopE gene. LcrF activity could be modulated by the interaction with an inducer molecule serving as a temperature messenger. The availability of the messenger would in turn be controlled by a temperature-responsive process serving as a cellular thermometer. This chain is Thermoregulatory protein LcrF (lcrF), found in Yersinia pestis.